Here is a 95-residue protein sequence, read N- to C-terminus: uncharacterized protein (95 aa).

Residues 65 to 95 (DANDYDTTTTEEEDSSTTTTTDNETNSDDDI) are disordered.

This is an uncharacterized protein from Lymantria dispar multicapsid nuclear polyhedrosis virus (LdMNPV).